Here is a 276-residue protein sequence, read N- to C-terminus: tRNA dimethylallyltransferase (276 aa).

Residues 9-12 (DSLS) form an interaction with substrate tRNA region.

It belongs to the IPP transferase family. Monomer. Mg(2+) is required as a cofactor.

It catalyses the reaction adenosine(37) in tRNA + dimethylallyl diphosphate = N(6)-dimethylallyladenosine(37) in tRNA + diphosphate. Catalyzes the transfer of a dimethylallyl group onto the adenine at position 37 in tRNAs that read codons beginning with uridine, leading to the formation of N6-(dimethylallyl)adenosine (i(6)A). The protein is tRNA dimethylallyltransferase (miaA) of Helicobacter pylori (strain HPAG1).